A 346-amino-acid chain; its full sequence is Tetraacyldisaccharide 4'-kinase (346 aa).

54-61 (TVGGAGKT) serves as a coordination point for ATP.

Belongs to the LpxK family.

The catalysed reaction is a lipid A disaccharide + ATP = a lipid IVA + ADP + H(+). It functions in the pathway glycolipid biosynthesis; lipid IV(A) biosynthesis; lipid IV(A) from (3R)-3-hydroxytetradecanoyl-[acyl-carrier-protein] and UDP-N-acetyl-alpha-D-glucosamine: step 6/6. In terms of biological role, transfers the gamma-phosphate of ATP to the 4'-position of a tetraacyldisaccharide 1-phosphate intermediate (termed DS-1-P) to form tetraacyldisaccharide 1,4'-bis-phosphate (lipid IVA). The polypeptide is Tetraacyldisaccharide 4'-kinase (Rhizobium meliloti (strain 1021) (Ensifer meliloti)).